The chain runs to 121 residues: Large ribosomal subunit protein bL12 (121 aa).

The protein belongs to the bacterial ribosomal protein bL12 family. In terms of assembly, homodimer. Part of the ribosomal stalk of the 50S ribosomal subunit. Forms a multimeric L10(L12)X complex, where L10 forms an elongated spine to which 2 to 4 L12 dimers bind in a sequential fashion. Binds GTP-bound translation factors.

Functionally, forms part of the ribosomal stalk which helps the ribosome interact with GTP-bound translation factors. Is thus essential for accurate translation. This is Large ribosomal subunit protein bL12 from Enterobacter sp. (strain 638).